The chain runs to 137 residues: Nucleoside diphosphate kinase (137 aa).

Residues Lys-9, Phe-57, Arg-85, Thr-91, Arg-102, and Asn-112 each contribute to the ATP site. His-115 functions as the Pros-phosphohistidine intermediate in the catalytic mechanism.

This sequence belongs to the NDK family. In terms of assembly, homotetramer. It depends on Mg(2+) as a cofactor.

Its subcellular location is the cytoplasm. The enzyme catalyses a 2'-deoxyribonucleoside 5'-diphosphate + ATP = a 2'-deoxyribonucleoside 5'-triphosphate + ADP. It carries out the reaction a ribonucleoside 5'-diphosphate + ATP = a ribonucleoside 5'-triphosphate + ADP. Its function is as follows. Major role in the synthesis of nucleoside triphosphates other than ATP. The ATP gamma phosphate is transferred to the NDP beta phosphate via a ping-pong mechanism, using a phosphorylated active-site intermediate. The sequence is that of Nucleoside diphosphate kinase from Sulfurimonas denitrificans (strain ATCC 33889 / DSM 1251) (Thiomicrospira denitrificans (strain ATCC 33889 / DSM 1251)).